A 232-amino-acid chain; its full sequence is Clarin-1 (232 aa).

A helical membrane pass occupies residues I8 to V28. N48 carries an N-linked (GlcNAc...) asparagine glycan. 2 helical membrane-spanning segments follow: residues I101–Y121 and L135–F155. N184 carries an N-linked (GlcNAc...) asparagine glycan. A helical membrane pass occupies residues T186–I206.

This sequence belongs to the clarin family.

Its subcellular location is the cell membrane. Functionally, may have a role in the excitatory ribbon synapse junctions between hair cells and cochlear ganglion cells and presumably also in analogous synapses within the retina. The protein is Clarin-1 (Clrn1) of Mus musculus (Mouse).